A 368-amino-acid chain; its full sequence is Peptide chain release factor 2 (368 aa).

At Gln251 the chain carries N5-methylglutamine.

This sequence belongs to the prokaryotic/mitochondrial release factor family. Post-translationally, methylated by PrmC. Methylation increases the termination efficiency of RF2.

The protein resides in the cytoplasm. Peptide chain release factor 2 directs the termination of translation in response to the peptide chain termination codons UGA and UAA. This is Peptide chain release factor 2 from Nitratiruptor sp. (strain SB155-2).